Here is a 473-residue protein sequence, read N- to C-terminus: tRNA modification GTPase MnmE (473 aa).

Residues Arg-31, Glu-95, and Arg-134 each contribute to the (6S)-5-formyl-5,6,7,8-tetrahydrofolate site. The TrmE-type G domain occupies 230–394 (GVSTVIAGKP…LKQHMGDLVK (165 aa)). GTP is bound by residues 240–245 (NAGKST), 259–265 (SHMPGTT), and 284–287 (DTAG). 2 residues coordinate Mg(2+): Ser-244 and Thr-265. A (6S)-5-formyl-5,6,7,8-tetrahydrofolate-binding site is contributed by Lys-473.

It belongs to the TRAFAC class TrmE-Era-EngA-EngB-Septin-like GTPase superfamily. TrmE GTPase family. In terms of assembly, homodimer. Heterotetramer of two MnmE and two MnmG subunits. It depends on K(+) as a cofactor.

It localises to the cytoplasm. Exhibits a very high intrinsic GTPase hydrolysis rate. Involved in the addition of a carboxymethylaminomethyl (cmnm) group at the wobble position (U34) of certain tRNAs, forming tRNA-cmnm(5)s(2)U34. This is tRNA modification GTPase MnmE from Chlorobaculum tepidum (strain ATCC 49652 / DSM 12025 / NBRC 103806 / TLS) (Chlorobium tepidum).